Here is a 264-residue protein sequence, read N- to C-terminus: Short-chain dehydrogenase/reductase malC (264 aa).

Residues 13–35 (GKNVLIIGGTSGIGFAVAQLVIE) form a helical membrane-spanning segment. NADP(+) is bound by residues Thr22, Ser23, Ile25, Ser45, Asn46, Lys49, Asp75, Asn88, Arg130, Val202, and Thr204. N-linked (GlcNAc...) asparagine glycosylation occurs at Asn249.

This sequence belongs to the short-chain dehydrogenases/reductases (SDR) family.

The protein localises to the membrane. The enzyme catalyses 1-hydroxy-3-{[2-(1,1-dimethylallyl)-indol-3-yl]methyl}-6H,7H,8H-5lambda(5)-pyrrolo[1,2-a]pyrazine + NADPH + H(+) = 1-hydroxy-3-{[2-(1,1-dimethylallyl)-indol-3-yl]methyl}-4H,6H,7H,8H-pyrrolo[1,2-a]pyrazine + NADP(+). It catalyses the reaction 1-hydroxy-3-{[2-(1,1-dimethylallyl)-indol-3-yl]methyl}-4H,6H,7H,8H-pyrrolo[1,2-a]pyrazine = (+)-premalbrancheamide. The protein operates within alkaloid biosynthesis. In terms of biological role, short-chain dehydrogenase/reductase; part of the gene cluster that mediates the biosynthesis of malbrancheamide, a dichlorinated fungal indole alkaloid that belongs to a family of natural products containing a characteristic bicyclo[2.2.2]diazaoctane core. The first step of malbrancheamide biosynthesis involves coupling of L-proline and L-tryptophan by malG, a bimodular NRPS, to produce L-Pro-L-Trp aldehyde through reductive offloading. This compound undergoes spontaneous cyclization and dehydration to give a dienamine which is reverse prenylated at C-2 by malE. The other prenyltransferase present in the cluster, malB, displays modest activity, suggesting that may be a redundant gene in the pathway. Subsequently, a [4+2] Diels-Alder cyclo-addition catalyzed by the bifunctional enzyme malC forms the characteristic bicyclo[2.2.2]diazaoctane ring of premalbrancheamid. The first reaction catalyzed is a NADPH-dependent reduction reaction in which the nicotinamide cofactor is a stoichiometric reagent. Either NADH or NADPH is effective as a cofactor. NADP(+) is required for stereocontrolled formation of premalbrancheamide, however it does not appear to be required as a formal stoichiometric reagent because the second reaction performed by malC, the [4+2] cycloaddition, is a balanced chemical reaction without requirement for hydride transfer to balance the reaction. Finally, the flavin-dependent halogenase malA catalyzes the iterative dichlorination of the indole ring of premalbrancheamide to yield C-9 monochlorinated malbrancheamide B, C-8 monochlorinated isomalbrancheamide B, and dichlorinated malbrancheamide. MalA is also able to brominate premalbrancheamide at C-9 to yield malbrancheamide C, and, to a lesser extend, at C-8 to yield isomalbrancheamide C. Finally, malA can brominate C-9 monochlorinated malbrancheamide B at C-8 to yield malbrancheamide D, or C-8 monochlorinated isomalbrancheamide B at C-9 to produce isomalbrancheamide D. The sequence is that of Short-chain dehydrogenase/reductase malC from Malbranchea aurantiaca.